A 175-amino-acid polypeptide reads, in one-letter code: Anterior gradient protein 2 homolog (175 aa).

The signal sequence occupies residues 1-20; sequence MEKISVSAFLLLVALSYTLA. Residues 21 to 40 form a required to promote cell adhesion region; sequence RDTTVKPAAKKDTKDSRPKL. 2 consecutive short sequence motifs (homodimer stabilization; interchain) follow at residues 45–54 and 60–67; these read SRGWGDQLIW and EALYKSKT.

It belongs to the AGR family. In terms of assembly, monomer and homodimer. Interacts with LYPD3 and DAG1 (alphaDAG1). Interacts with MUC2; disulfide-linked.

It localises to the secreted. The protein resides in the endoplasmic reticulum. In terms of biological role, required for MUC2 post-transcriptional synthesis and secretion. May play a role in the production of mucus by intestinal cells. Proto-oncogene that may play a role in cell migration, cell differentiation and cell growth. Promotes cell adhesion. This is Anterior gradient protein 2 homolog (AGR2) from Pongo abelii (Sumatran orangutan).